The sequence spans 461 residues: Steroidogenic factor 1 (461 aa).

Residues 10-85 (DELCPVCGDK…VGMRLEAVRA (76 aa)) constitute a DNA-binding region (nuclear receptor). The NR C4-type zinc-finger motif lies at 13–33 (CPVCGDKVSGYHYGLLTCESC). N6-acetyllysine is present on residues Lys34, Lys38, and Lys72. The NR C4-type zinc-finger motif lies at 49–73 (CTESQSCKIDKTQRKRCPFCRFQKC). A disordered region spans residues 116-158 (NGFKLETGPPVGVPPPPPPPPDYMLPHGLHASEPKGLASGPPA). Residue Lys119 forms a Glycyl lysine isopeptide (Lys-Gly) (interchain with G-Cter in SUMO) linkage. The segment covering 126–138 (VGVPPPPPPPPDY) has biased composition (pro residues). Lys194 participates in a covalent cross-link: Glycyl lysine isopeptide (Lys-Gly) (interchain with G-Cter in SUMO). Ser203 is subject to Phosphoserine; by CDK7. An NR LBD domain is found at 222 to 459 (GVPELILQLL…NLLIEMLQAK (238 aa)). Positions 230-461 (LLQLEPDEDQ…LIEMLQAKQT (232 aa)) are important for dimerization. A 1,2-diacyl-sn-glycero-3-phosphocholine-binding residues include Gly341, Tyr436, and Lys440.

The protein belongs to the nuclear hormone receptor family. NR5 subfamily. As to quaternary structure, binds DNA as a monomer. Part of a complex consisting of SFPQ, NONO and NR5A1. Interacts with NR0B2. Interacts with DGKQ and CDK7. Binds to and activated by HIPK3. Post-translationally, may be regulated by phosphorylation and dephosphorylation. Acetylation stimulates the transcriptional activity. In terms of processing, sumoylation reduces CDK7-mediated phosphorylation on Ser-203. Post-translationally, phosphorylated on Ser-203 by CDK7. This phosphorylation promotes transcriptional activity. In terms of tissue distribution, adrenal, ovary, testis, placenta, adipocyte, and brain.

The protein resides in the nucleus. In terms of biological role, transcriptional activator. Seems to be essential for sexual differentiation and formation of the primary steroidogenic tissues. Binds to the Ad4 site found in the promoter region of steroidogenic P450 genes such as CYP11A, CYP11B and CYP21B. Also regulates the AMH/Muellerian inhibiting substance gene as well as the AHCH and STAR genes. 5'-YCAAGGYC-3' and 5'-RRAGGTCA-3' are the consensus sequences for the recognition by NR5A1. The SFPQ-NONO-NR5A1 complex binds to the CYP17 promoter and regulates basal and cAMP-dependent transcriptional activity. Binds phospholipids with a phosphatidylinositol (PI) headgroup, in particular PI(3,4)P2 and PI(3,4,5)P3. Activated by the phosphorylation of NR5A1 by HIPK3 leading to increased steroidogenic gene expression upon cAMP signaling pathway stimulation. This chain is Steroidogenic factor 1 (NR5A1), found in Bos taurus (Bovine).